A 181-amino-acid chain; its full sequence is Der GTPase-activating protein YihI (181 aa).

Disordered regions lie at residues 1-75 (MSRK…KKIP) and 145-181 (EPEA…DYKG). A compositionally biased stretch (basic residues) spans 32–43 (RLRKKDKKRKGL). The span at 146–155 (PEAEEEFEDE) shows a compositional bias: acidic residues. The span at 156 to 165 (APVRKSRSDD) shows a compositional bias: basic and acidic residues. The segment covering 166-181 (DLLADFEDFDMDDYKG) has biased composition (acidic residues).

It belongs to the YihI family. Interacts with Der.

Functionally, a GTPase-activating protein (GAP) that modifies Der/EngA GTPase function. May play a role in ribosome biogenesis. This chain is Der GTPase-activating protein YihI, found in Vibrio vulnificus (strain YJ016).